A 338-amino-acid chain; its full sequence is Anthocyanidin reductase ((2S)-flavan-3-ol-forming) (338 aa).

NADP(+)-binding positions include threonine 18 to valine 21, lysine 48, valine 87 to proline 90, and tyrosine 168.

Belongs to the NAD(P)-dependent epimerase/dehydratase family. Dihydroflavonol-4-reductase subfamily. Expressed in seeds, grape skins, flowers and leaves.

It catalyses the reaction a (2S,3R)-flavan-3-ol + 2 NADP(+) = an anthocyanidin with a 3-hydroxy group + 2 NADPH + 2 H(+). The enzyme catalyses a (2S,3S)-flavan-3-ol + 2 NADP(+) = an anthocyanidin with a 3-hydroxy group + 2 NADPH + 2 H(+). The protein operates within secondary metabolite biosynthesis; flavonoid biosynthesis. With respect to regulation, inhibited at NaCl concentrations higher than 200 mM. Its function is as follows. Produces the terminal flavan-3-ol monomers required for the formation of proanthocyanidins or condensed tannins in leaves and flowers, as well as in the skin and seeds of developing berries. Behaves as a reductase and as a C-3 epimerase. Catalyzes the double reduction of anthocyanidins, producing a mixture of (2S,3S)- and (2S,3R)-flavan-3-ols. The enzyme catalyzes sequential hydride transfers to C-2 and C-4, respectively and epimerization at C-3 is achieved by tautomerization that occurs between the two hydride transfers. Converts cyanidin, pelargonidin and delphinidin into catechin and epicatechin, afzelechin and epiafzelechin, and gallocatechin and epigallocatechin respectively. The polypeptide is Anthocyanidin reductase ((2S)-flavan-3-ol-forming) (Vitis vinifera (Grape)).